Consider the following 107-residue polypeptide: uncharacterized protein (107 aa).

The segment covering Glu-88 to Lys-97 has biased composition (basic and acidic residues). The tract at residues Glu-88 to Trp-107 is disordered. The span at Lys-98–Trp-107 shows a compositional bias: basic residues.

This is an uncharacterized protein from Methanocaldococcus jannaschii (strain ATCC 43067 / DSM 2661 / JAL-1 / JCM 10045 / NBRC 100440) (Methanococcus jannaschii).